A 178-amino-acid polypeptide reads, in one-letter code: Vegetative protein (178 aa).

2 disordered regions span residues 67–102 and 138–158; these read AGRR…AAAG and NRRP…DIKL. Low complexity predominate over residues 76–90; that stretch reads PAARSAVTAAPAAVG.

The sequence is that of Vegetative protein (vegA) from Myxococcus xanthus.